The sequence spans 211 residues: Dephospho-CoA kinase (211 aa).

The 204-residue stretch at 3–206 (VLGLTGGIGS…PGMKGPDPHA (204 aa)) folds into the DPCK domain. 11-16 (GSGKSI) lines the ATP pocket.

This sequence belongs to the CoaE family.

The protein resides in the cytoplasm. It catalyses the reaction 3'-dephospho-CoA + ATP = ADP + CoA + H(+). The protein operates within cofactor biosynthesis; coenzyme A biosynthesis; CoA from (R)-pantothenate: step 5/5. Functionally, catalyzes the phosphorylation of the 3'-hydroxyl group of dephosphocoenzyme A to form coenzyme A. The protein is Dephospho-CoA kinase of Syntrophotalea carbinolica (strain DSM 2380 / NBRC 103641 / GraBd1) (Pelobacter carbinolicus).